The sequence spans 361 residues: Hsc70-interacting protein (361 aa).

The segment at 39-98 (GGTIPPAPASTSTDETSKGKAEEQPEEPVKSPEPESEESDLEIDNEGVIEPDNDDPQEMG) is disordered. A compositionally biased stretch (basic and acidic residues) spans 53–71 (ETSKGKAEEQPEEPVKSPE). The span at 72-98 (PESEESDLEIDNEGVIEPDNDDPQEMG) shows a compositional bias: acidic residues. TPR repeat units lie at residues 112–145 (ANEK…NPCL), 147–179 (ILYA…NPDS), and 181–213 (QTYK…DYDE). The span at 254 to 270 (KAREEHERAQREEEARR) shows a compositional bias: basic and acidic residues. The tract at residues 254–292 (KAREEHERAQREEEARRQAGGAQFGGFPGGFPGGFPGAM) is disordered. Residues 275 to 292 (AQFGGFPGGFPGGFPGAM) are compositionally biased toward gly residues. An STI1 domain is found at 311–350 (DPEVLAAMQDPEVMAAFQDVAQNPANMSKYQNNPKVMSLI).

Belongs to the FAM10 family. Homotetramer. Interacts with HSC70 as well as DNAJ homologs and HSP90.

It is found in the cytoplasm. Its function is as follows. One HIP oligomer binds the ATPase domains of at least two HSC70 molecules dependent on activation of the HSC70 ATPase by HSP40. Stabilizes the ADP state of HSC70 that has a high affinity for substrate protein. Through its own chaperone activity, it may contribute to the interaction of HSC70 with various target proteins. The polypeptide is Hsc70-interacting protein (ST13) (Gallus gallus (Chicken)).